The primary structure comprises 112 residues: Large ribosomal subunit protein mL53 (112 aa).

The protein belongs to the mitochondrion-specific ribosomal protein mL53 family. As to quaternary structure, component of the mitochondrial ribosome large subunit (39S) which comprises a 16S rRNA and about 50 distinct proteins.

The protein localises to the mitochondrion. This chain is Large ribosomal subunit protein mL53 (MRPL53), found in Bos taurus (Bovine).